Here is a 590-residue protein sequence, read N- to C-terminus: DNA mismatch repair protein MutL (590 aa).

The protein belongs to the DNA mismatch repair MutL/HexB family.

In terms of biological role, this protein is involved in the repair of mismatches in DNA. It is required for dam-dependent methyl-directed DNA mismatch repair. May act as a 'molecular matchmaker', a protein that promotes the formation of a stable complex between two or more DNA-binding proteins in an ATP-dependent manner without itself being part of a final effector complex. The chain is DNA mismatch repair protein MutL from Caldanaerobacter subterraneus subsp. tengcongensis (strain DSM 15242 / JCM 11007 / NBRC 100824 / MB4) (Thermoanaerobacter tengcongensis).